We begin with the raw amino-acid sequence, 189 residues long: Small ribosomal subunit protein uS5 (189 aa).

One can recognise an S5 DRBM domain in the interval 22–85; the sequence is LIDKLVTINR…ERAKRGMIRV (64 aa). A disordered region spans residues 164–189; that stretch reads SVASRRGKKVADLFGPKREKEAPADV. Basic and acidic residues predominate over residues 172-189; sequence KVADLFGPKREKEAPADV.

It belongs to the universal ribosomal protein uS5 family. As to quaternary structure, part of the 30S ribosomal subunit. Contacts proteins S4 and S8.

Functionally, with S4 and S12 plays an important role in translational accuracy. In terms of biological role, located at the back of the 30S subunit body where it stabilizes the conformation of the head with respect to the body. This chain is Small ribosomal subunit protein uS5, found in Acidiphilium cryptum (strain JF-5).